The following is a 1603-amino-acid chain: Vitellogenin-5 (1603 aa).

An N-terminal signal peptide occupies residues 1–15; sequence MKSIIIASLVALAIA. The region spanning 24 to 685 is the Vitellogenin domain; sequence FSPKSEYVYK…EKNAFLPKEV (662 aa). The 170-residue stretch at 1306–1475 folds into the VWFD domain; that stretch reads ATCKVDQSEV…SYLLKNEECE (170 aa). 2 disulfide bridges follow: Cys1308-Cys1438 and Cys1330-Cys1474. The segment at 1492–1513 is disordered; that stretch reads NREEKKSDYESSSDYESNYDEK.

Vitellogenin 5 undergoes little if any processing before being packaged into yolk platelets. Expressed in the intestine of adult hermaphrodites.

It localises to the secreted. Precursor of the egg-yolk proteins that are sources of nutrients during embryonic development. Together with other vitellogenins, may play a role in modulating life-span, acting via induction of autophagy and lysosomal lipolysis. This is Vitellogenin-5 (vit-5) from Caenorhabditis elegans.